The sequence spans 349 residues: MAGGRCGPQLTALLAAWIAAVAATAGPEEAALPPEQSRVQPMTASNWTLVMEGEWMLKFYAPWCPSCQQTDSEWEAFAKNGEILQISVGKVDVIQEPGLSGRFFVTTLPAFFHAKDGIFRRYRGPGIFEDLQNYILEKKWQSVEPLTGWKSPASLTMSGMAGLFSISGKIWHLHNYFTVTLGIPAWCSYVFFVIATLVFGLFMGLVLVVISECFYVPLPRHLSERSEQNRRSEEAHRAEQLQDAEEEKDDSNEEENKDSLVDDEEEKEDLGDEDEAEEEEEEDNLAAGVDEERSEANDQGPPGEDGVTREEVEPEEAEEGISEQPCPADTEVVEDSLRQRKSQHADKGL.

A signal peptide spans 1–23 (MAGGRCGPQLTALLAAWIAAVAA). The Thioredoxin domain maps to 30–137 (AALPPEQSRV…FEDLQNYILE (108 aa)). Catalysis depends on nucleophile residues Cys-64 and Cys-67. A disulfide bond links Cys-64 and Cys-67. The chain crosses the membrane as a helical span at residues 190-210 (VFFVIATLVFGLFMGLVLVVI). Positions 225-240 (RSEQNRRSEEAHRAEQ) are enriched in basic and acidic residues. The disordered stretch occupies residues 225–349 (RSEQNRRSEE…RKSQHADKGL (125 aa)). Composition is skewed to acidic residues over residues 242–284 (QDAE…EEDN) and 312–321 (VEPEEAEEGI). 2 positions are modified to phosphoserine: Ser-251 and Ser-259. The span at 335 to 349 (DSLRQRKSQHADKGL) shows a compositional bias: basic and acidic residues.

Its subcellular location is the nucleus inner membrane. It localises to the endoplasmic reticulum membrane. In Homo sapiens (Human), this protein is Thioredoxin-related transmembrane protein 4 (TMX4).